The primary structure comprises 82 residues: MVTIRLTRGGAKKRPFYQIVVADSRSPRDGRFIERIGFFNPLAAGQAERLRLDVAKVDAWVAKGADLSDRVASLVKEARKAA.

This sequence belongs to the bacterial ribosomal protein bS16 family.

This Actinobacillus pleuropneumoniae serotype 5b (strain L20) protein is Small ribosomal subunit protein bS16.